We begin with the raw amino-acid sequence, 327 residues long: T-cell surface glycoprotein CD1a (327 aa).

The N-terminal stretch at 1-16 (MLFLLLPLLAVLPGDG) is a signal peptide. Residues 17-300 (NADGLKEPLS…VLYWEHHSSV (284 aa)) lie on the Extracellular side of the membrane. N-linked (GlcNAc...) asparagine glycans are attached at residues asparagine 37, asparagine 60, and asparagine 74. 90-94 (RTIRS) serves as a coordination point for a D-galactosylceramide. 2 disulfides stabilise this stretch: cysteine 119–cysteine 183 and cysteine 223–cysteine 278. Asparagine 145 carries N-linked (GlcNAc...) asparagine glycosylation. Residues glutamate 171 and threonine 175 each contribute to the a D-galactosylceramide site. The 108-residue stretch at 184–291 (PRFILGLLDA…HSSLEGQDIV (108 aa)) folds into the Ig-like domain. The helical transmembrane segment at 301 to 321 (GFIILAVIVPLLLLIGLALWF) threads the bilayer. The Cytoplasmic portion of the chain corresponds to 322–327 (RKRCFC).

In terms of assembly, heterodimer with B2M (beta-2-microglobulin). Interacts with CD74. In terms of tissue distribution, expressed on cortical thymocytes, epidermal Langerhans cells, dendritic cells, on certain T-cell leukemias, and in various other tissues.

Its subcellular location is the cell membrane. It localises to the membrane raft. It is found in the endosome membrane. In terms of biological role, antigen-presenting protein that binds self and non-self lipid and glycolipid antigens and presents them to T-cell receptors on natural killer T-cells. The sequence is that of T-cell surface glycoprotein CD1a (CD1A) from Homo sapiens (Human).